The chain runs to 128 residues: 3-aminoacrylate deaminase RutC (128 aa).

The protein belongs to the RutC family. In terms of assembly, homotrimer.

The enzyme catalyses (Z)-3-aminoacrylate + H2O + H(+) = 3-oxopropanoate + NH4(+). In terms of biological role, involved in pyrimidine catabolism. Catalyzes the deamination of 3-aminoacrylate to malonic semialdehyde, a reaction that can also occur spontaneously. RutC may facilitate the reaction and modulate the metabolic fitness, rather than catalyzing essential functions. The protein is 3-aminoacrylate deaminase RutC of Escherichia coli O157:H7.